We begin with the raw amino-acid sequence, 60 residues long: UPF0337 protein asr4653 (60 aa).

This sequence belongs to the UPF0337 (CsbD) family.

This Nostoc sp. (strain PCC 7120 / SAG 25.82 / UTEX 2576) protein is UPF0337 protein asr4653.